The primary structure comprises 94 residues: Co-chaperonin GroES (94 aa).

This sequence belongs to the GroES chaperonin family. As to quaternary structure, heptamer of 7 subunits arranged in a ring. Interacts with the chaperonin GroEL.

It is found in the cytoplasm. Its function is as follows. Together with the chaperonin GroEL, plays an essential role in assisting protein folding. The GroEL-GroES system forms a nano-cage that allows encapsulation of the non-native substrate proteins and provides a physical environment optimized to promote and accelerate protein folding. GroES binds to the apical surface of the GroEL ring, thereby capping the opening of the GroEL channel. The polypeptide is Co-chaperonin GroES (Latilactobacillus sakei subsp. sakei (strain 23K) (Lactobacillus sakei subsp. sakei)).